We begin with the raw amino-acid sequence, 30 residues long: U-actitoxin-Bcg2a (30 aa).

An intrachain disulfide couples cysteine 7 to cysteine 27.

It localises to the secreted. Its subcellular location is the nematocyst. Functionally, possible voltage-gated potassium channel (Kv) blocker. This is U-actitoxin-Bcg2a from Bunodosoma cangicum (Sea anemone).